Reading from the N-terminus, the 1126-residue chain is Probable serine/threonine-protein kinase DDB_G0280111 (1126 aa).

The region spanning leucine 16–phenylalanine 295 is the Protein kinase domain. ATP-binding positions include isoleucine 22–valine 30 and lysine 45. Residue aspartate 147 is the Proton acceptor of the active site. The segment covering asparagine 314–isoleucine 333 has biased composition (low complexity). 4 disordered regions span residues asparagine 314–asparagine 469, leucine 760–glutamine 901, threonine 944–arginine 1072, and asparagine 1095–asparagine 1126. The segment covering threonine 347–serine 364 has biased composition (pro residues). The span at valine 367–proline 390 shows a compositional bias: polar residues. 3 stretches are compositionally biased toward low complexity: residues proline 413–aspartate 422, asparagine 432–asparagine 469, and leucine 760–serine 795. Polar residues-rich tracts occupy residues phenylalanine 796–glycine 825 and glutamate 833–serine 845. Low complexity predominate over residues asparagine 846–asparagine 856. Polar residues predominate over residues glycine 857–serine 866. Composition is skewed to low complexity over residues glutamine 886–glutamine 901, proline 953–glutamine 971, and asparagine 1003–leucine 1035. A compositionally biased stretch (polar residues) spans asparagine 1095–asparagine 1105. Residues aspartate 1108–asparagine 1126 are compositionally biased toward acidic residues.

It belongs to the protein kinase superfamily. Ser/Thr protein kinase family.

It catalyses the reaction L-seryl-[protein] + ATP = O-phospho-L-seryl-[protein] + ADP + H(+). The catalysed reaction is L-threonyl-[protein] + ATP = O-phospho-L-threonyl-[protein] + ADP + H(+). The sequence is that of Probable serine/threonine-protein kinase DDB_G0280111 from Dictyostelium discoideum (Social amoeba).